The chain runs to 70 residues: DNA-directed RNA polymerase subunit omega (70 aa).

This sequence belongs to the RNA polymerase subunit omega family. The RNAP catalytic core consists of 2 alpha, 1 beta, 1 beta' and 1 omega subunit. When a sigma factor is associated with the core the holoenzyme is formed, which can initiate transcription.

The enzyme catalyses RNA(n) + a ribonucleoside 5'-triphosphate = RNA(n+1) + diphosphate. Promotes RNA polymerase assembly. Latches the N- and C-terminal regions of the beta' subunit thereby facilitating its interaction with the beta and alpha subunits. The polypeptide is DNA-directed RNA polymerase subunit omega (Staphylococcus epidermidis (strain ATCC 35984 / DSM 28319 / BCRC 17069 / CCUG 31568 / BM 3577 / RP62A)).